The primary structure comprises 247 residues: 5'-nucleotidase SurE (247 aa).

A divalent metal cation contacts are provided by Asp-8, Asp-9, Ser-39, and Asn-91.

Belongs to the SurE nucleotidase family. Requires a divalent metal cation as cofactor.

Its subcellular location is the cytoplasm. The enzyme catalyses a ribonucleoside 5'-phosphate + H2O = a ribonucleoside + phosphate. Nucleotidase that shows phosphatase activity on nucleoside 5'-monophosphates. The polypeptide is 5'-nucleotidase SurE (Chromobacterium violaceum (strain ATCC 12472 / DSM 30191 / JCM 1249 / CCUG 213 / NBRC 12614 / NCIMB 9131 / NCTC 9757 / MK)).